A 241-amino-acid chain; its full sequence is Viral CASP8 and FADD-like apoptosis regulator (241 aa).

DED domains lie at 8 to 78 (PSLP…SRFG) and 95 to 175 (RYRK…QLVE). A disordered region spans residues 212–241 (CMPVQESSDSPELLRTPVQESSSDSPEQTT). The span at 229–241 (VQESSSDSPEQTT) shows a compositional bias: polar residues.

Associates with the death-inducing signaling complex (DISC) formed by TNFRSF6/FAS, FADD and CASP8. Interacts with FADD. Interacts with host TRAF2. Interacts with host NEMO/IKBKG (via N-terminus). Interacts with host SH3BP4; this interaction plays an important in the suppression of host autophagy.

Its subcellular location is the host cytoplasm. The protein resides in the host nucleus. Functionally, inhibits TNFRSF1A, TNFRSF6/FAS and TNFRSF12 induced apoptosis. Directs the degradation of host NFKBIB but not NFKBIA. Also suppresses host NF-kappa-B activation by interacting with and preventing ubiquitination of host NEMO/IKBKG, the NF-kappa-B essential modulator subunit of the IKK complex. Interferes with host CASP8/caspase-8 recruitment and activation at the death-inducing signaling complex (DISC). May lead to higher virus production and contribute to virus persistence and oncogenicity. Also participates in the inhibition of host autophagy by interacting with host SH3BP4. The protein is Viral CASP8 and FADD-like apoptosis regulator of Homo sapiens (Human).